We begin with the raw amino-acid sequence, 496 residues long: Gasdermin-E (496 aa).

The membrane targeting domain stretch occupies residues 1 to 56 (MFAKATRNFLREVDADGDLIAVSNLNDSDKLQLLSLVTKKKRFWCWQRPKYQFLSL). Cysteine 45 is modified (S-(2-succinyl)cysteine). Lysine 120 participates in a covalent cross-link: Glycyl lysine isopeptide (Lys-Gly) (interchain with G-Cter in ubiquitin). S-(2-succinyl)cysteine occurs at positions 156, 168, and 180. Lysine 189 participates in a covalent cross-link: Glycyl lysine isopeptide (Lys-Gly) (interchain with G-Cter in ubiquitin). S-(2-succinyl)cysteine is present on residues cysteine 235, cysteine 371, cysteine 408, cysteine 417, and cysteine 489.

It belongs to the gasdermin family. In terms of assembly, homooligomer; homooligomeric ring-shaped pore complex containing 27-28 subunits when inserted in the membrane. Post-translationally, cleavage at Asp-270 by CASP3 (mature and uncleaved precursor forms) or granzyme B (GZMB) relieves autoinhibition and is sufficient to initiate pyroptosis. Succination by the Krebs cycle intermediate fumarate, which leads to S-(2-succinyl)cysteine residues, inhibits processing by caspases, and ability to initiate pyroptosis. Succination modification is catalyzed by a non-enzymatic reaction caused by an accumulation of fumarate. In terms of processing, ubiquitinated at Lys-120 and Lys-189 via 'Lys-48'-linked polyubiquitin chains, leading to proteasomal degradation. Deubiquitinated by USP48, leading to increased stability. Post-translationally, palmitoylated. As to expression, expressed in cochlea. Low level of expression in heart, brain, placenta, lung, liver, skeletal muscle, kidney and pancreas, with highest expression in placenta.

The protein localises to the cell membrane. It localises to the cytoplasm. It is found in the cytosol. Its activity is regulated as follows. The full-length protein before cleavage is inactive: intramolecular interactions between N- and C-terminal domains mediate autoinhibition in the absence of activation signal. The intrinsic pyroptosis-inducing activity is carried by the released N-terminal moiety (Gasdermin-E, N-terminal) following cleavage by CASP3 or granzyme B (GZMB). Activated by NLRP1 in the absence of GSDMD expression: NLRP1 cleaves and activates CASP8, promoting downstream activation of CASP3 and subsequent activation of GSDME. With respect to regulation, (Microbial infection) Activated upon human coronavirus SARS-CoV-2 infection, leading to lung epithelial cell death. Activation takes place in response to (1) activation of NLRP1 and (2) inactivation of GSDMD following NLRP1 and GSDMD cleavage by the SARS-CoV-2 3C-like proteinase nsp5. Functionally, precursor of a pore-forming protein that converts non-inflammatory apoptosis to pyroptosis. This form constitutes the precursor of the pore-forming protein: upon cleavage, the released N-terminal moiety (Gasdermin-E, N-terminal) binds to membranes and forms pores, triggering pyroptosis. In terms of biological role, pore-forming protein produced by cleavage by CASP3 or granzyme B (GZMB), which converts non-inflammatory apoptosis to pyroptosis or promotes granzyme-mediated pyroptosis, respectively. After cleavage, moves to the plasma membrane, homooligomerizes within the membrane and forms pores of 10-15 nanometers (nm) of inner diameter, allowing the release of mature interleukins (IL1B and IL16) and triggering pyroptosis. Binds to inner leaflet lipids, bisphosphorylated phosphatidylinositols, such as phosphatidylinositol (4,5)-bisphosphate. Cleavage by CASP3 switches CASP3-mediated apoptosis induced by TNF or danger signals, such as chemotherapy drugs, to pyroptosis. Mediates secondary necrosis downstream of the mitochondrial apoptotic pathway and CASP3 activation as well as in response to viral agents. Exhibits bactericidal activity. Cleavage by GZMB promotes tumor suppressor activity by triggering robust anti-tumor immunity. Suppresses tumors by mediating granzyme-mediated pyroptosis in target cells of natural killer (NK) cells: cleavage by granzyme B (GZMB), delivered to target cells from NK-cells, triggers pyroptosis of tumor cells and tumor suppression. May play a role in the p53/TP53-regulated cellular response to DNA damage. Its function is as follows. (Microbial infection) Pore-forming protein, which promotes maternal placental pyroptosis in response to Zika virus infection, contributing to adverse fetal outcomes. The polypeptide is Gasdermin-E (Homo sapiens (Human)).